We begin with the raw amino-acid sequence, 222 residues long: Adenylate kinase (222 aa).

Ser2 is a propeptide (removed in mature form). 2 positions are modified to N-acetylserine: Ser2 and Ser3. 16–21 (GAGKGT) contacts ATP. The interval 36-65 (ATGDMLRSQIAKGTQLGLEAKKIMDQGGLV) is NMP. AMP-binding positions include Thr37, Arg42, 63–65 (GLV), 92–95 (GFPR), and Gln99. Residues 133–170 (GRLIHPASGRSYHKIFNPPKEDMKDDVTGEALVQRSDD) form an LID region. ATP-binding positions include Arg134 and 143–144 (SY). AMP is bound by residues Arg167 and Arg178. An ATP-binding site is contributed by Gln206.

Belongs to the adenylate kinase family. AK2 subfamily. In terms of assembly, monomer.

It is found in the cytoplasm. Its subcellular location is the cytosol. The protein resides in the mitochondrion intermembrane space. The enzyme catalyses AMP + ATP = 2 ADP. In terms of biological role, catalyzes the reversible transfer of the terminal phosphate group between ATP and AMP. Plays an important role in cellular energy homeostasis and in adenine nucleotide metabolism. Adenylate kinase activity is critical for regulation of the phosphate utilization and the AMP de novo biosynthesis pathways. The protein is Adenylate kinase of Saccharomyces cerevisiae (strain RM11-1a) (Baker's yeast).